The chain runs to 437 residues: Epsilon-sarcoglycan (437 aa).

Residues 1–317 lie on the Extracellular side of the membrane; sequence MQLPRWWELG…LKSRDYYTDF (317 aa). An N-linked (GlcNAc...) asparagine glycan is attached at N200. The chain crosses the membrane as a helical span at residues 318–338; sequence LITLAVPSAVALVLFLILAYI. At 339–437 the chain is on the cytoplasmic side; that stretch reads MCCRREGVEK…QQQTTGKWYP (99 aa).

It belongs to the sarcoglycan alpha/epsilon family. N-glycosylated. In terms of processing, ubiquitinated, leading to its degradation by the proteasome.

It localises to the cell membrane. It is found in the sarcolemma. The protein localises to the cytoplasm. Its subcellular location is the cytoskeleton. The protein resides in the cell projection. It localises to the dendrite. It is found in the golgi apparatus. Component of the sarcoglycan complex, a subcomplex of the dystrophin-glycoprotein complex which forms a link between the F-actin cytoskeleton and the extracellular matrix. The sequence is that of Epsilon-sarcoglycan from Pongo abelii (Sumatran orangutan).